Reading from the N-terminus, the 179-residue chain is ATP synthase subunit delta (179 aa).

This sequence belongs to the ATPase delta chain family. As to quaternary structure, F-type ATPases have 2 components, F(1) - the catalytic core - and F(0) - the membrane proton channel. F(1) has five subunits: alpha(3), beta(3), gamma(1), delta(1), epsilon(1). F(0) has three main subunits: a(1), b(2) and c(10-14). The alpha and beta chains form an alternating ring which encloses part of the gamma chain. F(1) is attached to F(0) by a central stalk formed by the gamma and epsilon chains, while a peripheral stalk is formed by the delta and b chains.

It localises to the cell inner membrane. In terms of biological role, f(1)F(0) ATP synthase produces ATP from ADP in the presence of a proton or sodium gradient. F-type ATPases consist of two structural domains, F(1) containing the extramembraneous catalytic core and F(0) containing the membrane proton channel, linked together by a central stalk and a peripheral stalk. During catalysis, ATP synthesis in the catalytic domain of F(1) is coupled via a rotary mechanism of the central stalk subunits to proton translocation. This protein is part of the stalk that links CF(0) to CF(1). It either transmits conformational changes from CF(0) to CF(1) or is implicated in proton conduction. The sequence is that of ATP synthase subunit delta from Burkholderia orbicola (strain MC0-3).